Consider the following 735-residue polypeptide: Phosphoribosylformylglycinamidine synthase subunit PurL (735 aa).

His-49 is an active-site residue. ATP-binding residues include Tyr-52 and Lys-91. A Mg(2+)-binding site is contributed by Glu-93. Substrate contacts are provided by residues Ser-94 to His-97 and Arg-116. The active-site Proton acceptor is His-95. Mg(2+) is bound at residue Asp-117. Gln-240 serves as a coordination point for substrate. Asp-268 lines the Mg(2+) pocket. Residue Glu-312–Gln-314 coordinates substrate. ATP contacts are provided by Asp-493 and Gly-530. Residue Asn-531 participates in Mg(2+) binding. Ser-533 provides a ligand contact to substrate.

Belongs to the FGAMS family. As to quaternary structure, monomer. Part of the FGAM synthase complex composed of 1 PurL, 1 PurQ and 2 PurS subunits.

It localises to the cytoplasm. It carries out the reaction N(2)-formyl-N(1)-(5-phospho-beta-D-ribosyl)glycinamide + L-glutamine + ATP + H2O = 2-formamido-N(1)-(5-O-phospho-beta-D-ribosyl)acetamidine + L-glutamate + ADP + phosphate + H(+). It functions in the pathway purine metabolism; IMP biosynthesis via de novo pathway; 5-amino-1-(5-phospho-D-ribosyl)imidazole from N(2)-formyl-N(1)-(5-phospho-D-ribosyl)glycinamide: step 1/2. Its function is as follows. Part of the phosphoribosylformylglycinamidine synthase complex involved in the purines biosynthetic pathway. Catalyzes the ATP-dependent conversion of formylglycinamide ribonucleotide (FGAR) and glutamine to yield formylglycinamidine ribonucleotide (FGAM) and glutamate. The FGAM synthase complex is composed of three subunits. PurQ produces an ammonia molecule by converting glutamine to glutamate. PurL transfers the ammonia molecule to FGAR to form FGAM in an ATP-dependent manner. PurS interacts with PurQ and PurL and is thought to assist in the transfer of the ammonia molecule from PurQ to PurL. The chain is Phosphoribosylformylglycinamidine synthase subunit PurL from Methylocella silvestris (strain DSM 15510 / CIP 108128 / LMG 27833 / NCIMB 13906 / BL2).